We begin with the raw amino-acid sequence, 461 residues long: Fumarate hydratase class II (461 aa).

Residues 97 to 99 (SGT), 127 to 130 (HPND), 137 to 139 (SSN), and threonine 185 each bind substrate. The active-site Proton donor/acceptor is histidine 186. Serine 316 is an active-site residue. Residues serine 317 and 322–324 (KVN) contribute to the substrate site.

This sequence belongs to the class-II fumarase/aspartase family. Fumarase subfamily. As to quaternary structure, homotetramer.

Its subcellular location is the cytoplasm. The enzyme catalyses (S)-malate = fumarate + H2O. It participates in carbohydrate metabolism; tricarboxylic acid cycle; (S)-malate from fumarate: step 1/1. In terms of biological role, involved in the TCA cycle. Catalyzes the stereospecific interconversion of fumarate to L-malate. This chain is Fumarate hydratase class II, found in Staphylococcus haemolyticus (strain JCSC1435).